The following is a 96-amino-acid chain: Co-chaperonin GroES (96 aa).

It belongs to the GroES chaperonin family. As to quaternary structure, heptamer of 7 subunits arranged in a ring. Interacts with the chaperonin GroEL.

It is found in the cytoplasm. In terms of biological role, together with the chaperonin GroEL, plays an essential role in assisting protein folding. The GroEL-GroES system forms a nano-cage that allows encapsulation of the non-native substrate proteins and provides a physical environment optimized to promote and accelerate protein folding. GroES binds to the apical surface of the GroEL ring, thereby capping the opening of the GroEL channel. The polypeptide is Co-chaperonin GroES (Paraburkholderia phymatum (strain DSM 17167 / CIP 108236 / LMG 21445 / STM815) (Burkholderia phymatum)).